The chain runs to 420 residues: MVSAGIEAMNVFGGTAYLDVMELAKYRHLDTARFENLLMKEKAVALPYEDPVTFGVNAAKPIIDALSEAEKDRIELLITCSESGIDFGKSLSTYIHEYLGLNRNCRLFEVKQACYSGTAGFQMAVNFILSQTSPGAKALVIASDISRFLIAEGGDALSEDWSYAEPSAGAGAVAVLVGENPEVFQIDPGANGYYGYEVMDTCRPIPDSEAGDSDLSLMSYLDCCEQTFLEYQKRVPGANYQDTFQYLAYHTPFGGMVKGAHRTMMRKVAKVKTSGIETDFLTRVKPGLNYCQRVGNIMGAALFLALASTIDQGRFDTPKRIGCFSYGSGCCSEFYSGITTPQGQERQRTFGIEKHLDRRYQLSMEEYELLFKGSGMVRFGTRNVKLDFEMIPGIMQSTQEKPRLFLEEISEFHRKYRWIS.

Glutamate 82 (proton donor/acceptor) is an active-site residue. Cysteine 114 functions as the Acyl-thioester intermediate in the catalytic mechanism. Catalysis depends on histidine 250, which acts as the Proton donor/acceptor.

Belongs to the thiolase-like superfamily. HMG-CoA synthase family.

The protein localises to the cytoplasm. It catalyses the reaction 3-oxobutanoyl-[ACP] + acetyl-[ACP] + H2O = (3S)-hydroxy-3-methylglutaryl-[ACP] + holo-[ACP] + H(+). It participates in antibiotic biosynthesis; bacillaene biosynthesis. In terms of biological role, involved in some intermediate steps for the synthesis of the antibiotic polyketide bacillaene which is involved in secondary metabolism. It catalyzes the aldol condensation between the acetyl group attached to the acyl-carrier-protein AcpK (Ac-AcpK) and a beta-ketothioester polyketide intermediate linked to one of the consecutive thiolation domains of PksL. The sequence is that of Polyketide biosynthesis 3-hydroxy-3-methylglutaryl-ACP synthase PksG (pksG) from Bacillus subtilis (strain 168).